The following is a 260-amino-acid chain: Thrombin-like enzyme flavoxobin (260 aa).

An N-terminal signal peptide occupies residues 1–18 (MVLIRVLANLLILQLSYA). Residues 19–24 (QKSSEL) constitute a propeptide that is removed on maturation. The Peptidase S1 domain maps to 25 to 251 (VIGGDECNIN…YNAWIQSIIA (227 aa)). Cystine bridges form between cysteine 31–cysteine 165, cysteine 52–cysteine 68, cysteine 100–cysteine 258, cysteine 144–cysteine 212, cysteine 176–cysteine 191, and cysteine 202–cysteine 227. Catalysis depends on charge relay system residues histidine 67 and aspartate 112. Catalysis depends on serine 206, which acts as the Charge relay system.

Belongs to the peptidase S1 family. Snake venom subfamily. In terms of assembly, monomer. Expressed by the venom gland.

The protein localises to the secreted. The catalysed reaction is Selective cleavage of Arg-|-Xaa bond in fibrinogen, to form fibrin, and release fibrinopeptide A. The specificity of further degradation of fibrinogen varies with species origin of the enzyme.. Inhibited by alpha(2)-macroglobulin, diisopropylfluorophosphate (DFP) and PMSF. Low inhibition by tosyl-L-lysine chloromethyl ketone. Its function is as follows. Thrombin-like snake venom serine protease that clots fibrinogen (FGA) by releasing fibrinopeptide A. According to PubMed:8585090, only cleaves rabbit fibrinogen, whereas no specificity is described in PubMed:3910643 (tests done on bovine fibrinogen). Also acts as a C3 convertase that independently cleaves human C3 and kick-starts the complement cascade. Also increases urokinase-type plasminogen activator (PLAU) and plasminogen activator inhibitor (SERPINE1) in cultured bovine pulmonary artery endothelial cells. Dose-dependently inhibits collagen-induced platelet aggregation. This is Thrombin-like enzyme flavoxobin (TLF1) from Protobothrops flavoviridis (Habu).